The following is a 158-amino-acid chain: Transcription elongation factor GreA (158 aa).

Residues 10 to 76 (TLEGKKKLEE…QIEKMIRNAE (67 aa)) are a coiled coil.

The protein belongs to the GreA/GreB family.

In terms of biological role, necessary for efficient RNA polymerase transcription elongation past template-encoded arresting sites. The arresting sites in DNA have the property of trapping a certain fraction of elongating RNA polymerases that pass through, resulting in locked ternary complexes. Cleavage of the nascent transcript by cleavage factors such as GreA or GreB allows the resumption of elongation from the new 3'terminus. GreA releases sequences of 2 to 3 nucleotides. In Halalkalibacterium halodurans (strain ATCC BAA-125 / DSM 18197 / FERM 7344 / JCM 9153 / C-125) (Bacillus halodurans), this protein is Transcription elongation factor GreA.